The chain runs to 673 residues: Citrate exporter 1 (673 aa).

The tract at residues 1-44 is disordered; that stretch reads MFNLNTKSSKEPEVTEVAVDSTPSSPVTRESSPESSPDNSAVDL. Positions 21-39 are enriched in polar residues; sequence STPSSPVTRESSPESSPDN. Residues 67 to 87 form a helical membrane-spanning segment; it reads FLVFGAMAFCMLVSFMDQNGI. Asn99 is a glycosylation site (N-linked (GlcNAc...) asparagine). 4 consecutive transmembrane segments (helical) span residues 103–123, 133–153, 164–184, and 194–214; these read TISW…VLYG, LVFM…ACAQ, FSGI…SDIV, and GILG…GAAF. Asn217 carries an N-linked (GlcNAc...) asparagine glycan. The next 8 membrane-spanning stretches (helical) occupy residues 222 to 242, 261 to 281, 292 to 312, 322 to 342, 364 to 384, 393 to 413, 419 to 439, and 465 to 485; these read AIFY…FFIL, PGLF…AGGG, ISML…EGFF, IFGT…GIAY, AAGM…ISGQ, LEVI…KCFW, MALL…CFQP, and SFGG…SLKA. The N-linked (GlcNAc...) asparagine glycan is linked to Asn526. A helical membrane pass occupies residues 529-549; it reads HTVFVFLCPIVGACLLVTVFV. The segment covering 564-596 has biased composition (basic and acidic residues); the sequence is AKTVEDKDKDESGTDCEDMTKGEVLVSEKEGKL. Disordered stretches follow at residues 564-608 and 636-673; these read AKTV…MHFG and FPPM…IQEE. N-linked (GlcNAc...) asparagine glycosylation is found at Asn599 and Asn662.

This sequence belongs to the major facilitator superfamily.

The protein localises to the cell membrane. The catalysed reaction is citrate(in) = citrate(out). In terms of biological role, transmembrane transporter that exports citrate across the cell membrane. The protein is Citrate exporter 1 of Yarrowia lipolytica (strain CLIB 122 / E 150) (Yeast).